The primary structure comprises 131 residues: Large ribosomal subunit protein bL17 (131 aa).

The protein belongs to the bacterial ribosomal protein bL17 family. Part of the 50S ribosomal subunit. Contacts protein L32.

The sequence is that of Large ribosomal subunit protein bL17 from Methylacidiphilum infernorum (isolate V4) (Methylokorus infernorum (strain V4)).